Here is a 158-residue protein sequence, read N- to C-terminus: NAD(P)H-quinone oxidoreductase subunit J, chloroplastic (158 aa).

Belongs to the complex I 30 kDa subunit family. In terms of assembly, NDH is composed of at least 16 different subunits, 5 of which are encoded in the nucleus.

The protein resides in the plastid. It localises to the chloroplast thylakoid membrane. It catalyses the reaction a plastoquinone + NADH + (n+1) H(+)(in) = a plastoquinol + NAD(+) + n H(+)(out). The catalysed reaction is a plastoquinone + NADPH + (n+1) H(+)(in) = a plastoquinol + NADP(+) + n H(+)(out). NDH shuttles electrons from NAD(P)H:plastoquinone, via FMN and iron-sulfur (Fe-S) centers, to quinones in the photosynthetic chain and possibly in a chloroplast respiratory chain. The immediate electron acceptor for the enzyme in this species is believed to be plastoquinone. Couples the redox reaction to proton translocation, and thus conserves the redox energy in a proton gradient. This Pelargonium hortorum (Common geranium) protein is NAD(P)H-quinone oxidoreductase subunit J, chloroplastic.